The following is a 482-amino-acid chain: GDP-D-glucose phosphorylase 1 (482 aa).

Positions 1-21 (MEPFPRILDDRLPRNMRRPRP) are disordered. Catalysis depends on histidine 255, which acts as the Tele-GMP-histidine intermediate. The segment at 461 to 482 (MPRSPSIRHRSSTRAQSDEGSK) is disordered.

The protein belongs to the GDPGP1 family. As to expression, expressed throughout the neuronal system, in the spermatheca and anterior hypodermal cells.

It localises to the cytoplasm. The enzyme catalyses GDP-alpha-D-glucose + phosphate = alpha-D-glucose 1-phosphate + GDP + H(+). Its function is as follows. Specific and highly efficient GDP-D-glucose phosphorylase regulating the levels of GDP-D-glucose in cells. The protein is GDP-D-glucose phosphorylase 1 of Caenorhabditis elegans.